A 51-amino-acid chain; its full sequence is Ovomucoid (51 aa).

In terms of domain architecture, Kazal-like spans 3-51 (VDCSGYPKPDCTLESFPLCGSDNQTYSNKCAFCNAAVERNVTLRHLGEC). Intrachain disulfides connect cysteine 5-cysteine 35, cysteine 13-cysteine 32, and cysteine 21-cysteine 51. Residue asparagine 42 is glycosylated (N-linked (GlcNAc...) asparagine).

It is found in the secreted. This chain is Ovomucoid, found in Rhynchotus rufescens (Red-winged tinamou).